The following is a 223-amino-acid chain: MNTSMQTYLVTQEDRSAGRSTTEIVEAAIDGGIDIVQLREKETTARRRYEIGQTVRTQTAQAGVTFLVNDRVDLAAAVNADGVHLGDDDLPVTAAREVLGQDAIIGRSVSTPAAAQRAEDIGADYLGVGAVYPTGTKDVTAESAEIGPKTVTAITDAVSIPVIGIGGITPSNTTEVIRAGADGVAVVSAITTADDPAAATRKLQGSVDTASVESQLPSEEPSA.

Residues 37–41 (QLREK) and Asn-69 contribute to the 4-amino-2-methyl-5-(diphosphooxymethyl)pyrimidine site. Residues Asp-70 and Asp-89 each contribute to the Mg(2+) site. Ser-108 is a binding site for 4-amino-2-methyl-5-(diphosphooxymethyl)pyrimidine. A 2-[(2R,5Z)-2-carboxy-4-methylthiazol-5(2H)-ylidene]ethyl phosphate-binding site is contributed by 134–136 (TGT). 4-amino-2-methyl-5-(diphosphooxymethyl)pyrimidine is bound at residue Lys-137. Residues Gly-167 and 187 to 188 (VS) each bind 2-[(2R,5Z)-2-carboxy-4-methylthiazol-5(2H)-ylidene]ethyl phosphate. Residues 197–223 (AAATRKLQGSVDTASVESQLPSEEPSA) are disordered. Over residues 206 to 217 (SVDTASVESQLP) the composition is skewed to polar residues.

It belongs to the thiamine-phosphate synthase family. The cofactor is Mg(2+).

The enzyme catalyses 2-[(2R,5Z)-2-carboxy-4-methylthiazol-5(2H)-ylidene]ethyl phosphate + 4-amino-2-methyl-5-(diphosphooxymethyl)pyrimidine + 2 H(+) = thiamine phosphate + CO2 + diphosphate. It catalyses the reaction 2-(2-carboxy-4-methylthiazol-5-yl)ethyl phosphate + 4-amino-2-methyl-5-(diphosphooxymethyl)pyrimidine + 2 H(+) = thiamine phosphate + CO2 + diphosphate. The catalysed reaction is 4-methyl-5-(2-phosphooxyethyl)-thiazole + 4-amino-2-methyl-5-(diphosphooxymethyl)pyrimidine + H(+) = thiamine phosphate + diphosphate. It functions in the pathway cofactor biosynthesis; thiamine diphosphate biosynthesis; thiamine phosphate from 4-amino-2-methyl-5-diphosphomethylpyrimidine and 4-methyl-5-(2-phosphoethyl)-thiazole: step 1/1. Condenses 4-methyl-5-(beta-hydroxyethyl)thiazole monophosphate (THZ-P) and 2-methyl-4-amino-5-hydroxymethyl pyrimidine pyrophosphate (HMP-PP) to form thiamine monophosphate (TMP). This is Thiamine-phosphate synthase from Haloquadratum walsbyi (strain DSM 16790 / HBSQ001).